We begin with the raw amino-acid sequence, 206 residues long: Flavin reductase (NADPH) (206 aa).

Residues glycine 10, threonine 12, glycine 13, asparagine 14, threonine 15, arginine 35, serine 38, and arginine 39 each contribute to the NADP(+) site. Serine 42 carries the post-translational modification Phosphoserine. Positions 54, 55, 75, 76, and 78 each coordinate NADP(+). Serine 82 bears the Phosphoserine mark. NADP(+) is bound by residues methionine 87, cysteine 109, histidine 132, histidine 153, and isoleucine 154. The S-nitroso-cysteine intermediate; for S-nitroso-CoA-dependent nitrosyltransferase activity role is filled by cysteine 109. Residue cysteine 188 is the S-nitroso-cysteine intermediate; for S-nitroso-CoA-dependent nitrosyltransferase activity of the active site.

Monomer. In terms of tissue distribution, at least expressed in the liver and erythrocyte.

It is found in the cytoplasm. It carries out the reaction reduced riboflavin + NADP(+) = riboflavin + NADPH + 2 H(+). It catalyses the reaction bilirubin IXbeta + NADP(+) = biliverdin IXbeta + NADPH + H(+). The enzyme catalyses FMNH2 + NAD(+) = FMN + NADH + 2 H(+). The catalysed reaction is FMNH2 + NADP(+) = FMN + NADPH + 2 H(+). It carries out the reaction S-nitroso-CoA + L-cysteinyl-[protein] = S-nitroso-L-cysteinyl-[protein] + CoA. It catalyses the reaction L-cysteinyl-[SCAN] + S-nitroso-CoA = S-nitroso-L-cysteinyl-[SCAN] + CoA. The enzyme catalyses S-nitroso-L-cysteinyl-[SCAN] + L-cysteinyl-[protein] = L-cysteinyl-[SCAN] + S-nitroso-L-cysteinyl-[protein]. In terms of biological role, enzyme that can both act as a NAD(P)H-dependent reductase and a S-nitroso-CoA-dependent nitrosyltransferase. Promotes fetal heme degradation during development. Also expressed in adult tissues, where it acts as a regulator of hematopoiesis, intermediary metabolism (glutaminolysis, glycolysis, TCA cycle and pentose phosphate pathway) and insulin signaling. Has a broad specificity oxidoreductase activity by catalyzing the NAD(P)H-dependent reduction of a variety of flavins, such as riboflavin, FAD or FMN, biliverdins, methemoglobin and PQQ (pyrroloquinoline quinone). Contributes to fetal heme catabolism by catalyzing reduction of biliverdin IXbeta into bilirubin IXbeta in the liver. Biliverdin IXbeta, which constitutes the major heme catabolite in the fetus is not present in adult. Does not reduce bilirubin IXalpha. Can also reduce the complexed Fe(3+) iron to Fe(2+) in the presence of FMN and NADPH. Acts as a protein nitrosyltransferase by catalyzing nitrosylation of cysteine residues of target proteins, such as HMOX2, INSR and IRS1. S-nitroso-CoA-dependent nitrosyltransferase activity is mediated via a 'ping-pong' mechanism: BLVRB first associates with both S-nitroso-CoA and protein substrate, nitric oxide group is then transferred from S-nitroso-CoA to Cys-109 and Cys-188 residues of BLVRB and from S-nitroso-BLVRB to the protein substrate. Inhibits insulin signaling by mediating nitrosylation of INSR and IRS1, leading to their inhibition. This chain is Flavin reductase (NADPH) (BLVRB), found in Bos taurus (Bovine).